The following is a 158-amino-acid chain: NAD(P)H-quinone oxidoreductase subunit J, chloroplastic (158 aa).

It belongs to the complex I 30 kDa subunit family. As to quaternary structure, NDH is composed of at least 16 different subunits, 5 of which are encoded in the nucleus.

Its subcellular location is the plastid. The protein resides in the chloroplast thylakoid membrane. It catalyses the reaction a plastoquinone + NADH + (n+1) H(+)(in) = a plastoquinol + NAD(+) + n H(+)(out). The catalysed reaction is a plastoquinone + NADPH + (n+1) H(+)(in) = a plastoquinol + NADP(+) + n H(+)(out). In terms of biological role, NDH shuttles electrons from NAD(P)H:plastoquinone, via FMN and iron-sulfur (Fe-S) centers, to quinones in the photosynthetic chain and possibly in a chloroplast respiratory chain. The immediate electron acceptor for the enzyme in this species is believed to be plastoquinone. Couples the redox reaction to proton translocation, and thus conserves the redox energy in a proton gradient. In Eucalyptus globulus subsp. globulus (Tasmanian blue gum), this protein is NAD(P)H-quinone oxidoreductase subunit J, chloroplastic.